The following is a 454-amino-acid chain: MAAKPGIPKGTRDFSPVEMAKRNYIFNTIRDVYHLYGFQQIETPSMEMLSTLMGKYGEEGDKLLFKIQNSGDYFSGITDEELLSRNAAKLASKFCEKGLRYDLTVPFARYVVMHRDEITFPFKRYQIQPVWRADRPQKGRYREFYQCDADVVGSDSLLNEVELMQIVDTVFTRFGIRVCIKINNRKILTGIAEIIGEADKIVDITVAIDKLDKIGLDNVNKELAEKGISEEAIAKLQPIILLSGTNTEKLATLKTVLSDSETGLKGVEESEFILNTLQTMGLKNEIELDLTLARGLNYYTGAIFEVKALDVQIGSITGGGRYDNLTGVFGMAGVSGVGISFGADRIFDVLNQLELYPKEAVNGTQLLFINFGEKEAAFSMGILSKARAAGIRAEIFPDAAKMKKQMSYANVKNIPFVAIVGENEMNEGKAMLKNMESGEQQLVTAEELIGALTK.

Belongs to the class-II aminoacyl-tRNA synthetase family. As to quaternary structure, homodimer.

The protein localises to the cytoplasm. It carries out the reaction tRNA(His) + L-histidine + ATP = L-histidyl-tRNA(His) + AMP + diphosphate + H(+). In Bacteroides fragilis (strain YCH46), this protein is Histidine--tRNA ligase.